A 983-amino-acid chain; its full sequence is Isoleucine--tRNA ligase (983 aa).

The 'HIGH' region signature appears at 61–71; it reads PYANGELHVGH. Residue Glu-608 coordinates L-isoleucyl-5'-AMP. The 'KMSKS' region signature appears at 649–653; sequence KMSKS. Lys-652 contacts ATP. 4 residues coordinate Zn(2+): Cys-952, Cys-955, Cys-972, and Cys-975.

The protein belongs to the class-I aminoacyl-tRNA synthetase family. IleS type 1 subfamily. As to quaternary structure, monomer. Zn(2+) is required as a cofactor.

The protein resides in the cytoplasm. The enzyme catalyses tRNA(Ile) + L-isoleucine + ATP = L-isoleucyl-tRNA(Ile) + AMP + diphosphate. Its function is as follows. Catalyzes the attachment of isoleucine to tRNA(Ile). As IleRS can inadvertently accommodate and process structurally similar amino acids such as valine, to avoid such errors it has two additional distinct tRNA(Ile)-dependent editing activities. One activity is designated as 'pretransfer' editing and involves the hydrolysis of activated Val-AMP. The other activity is designated 'posttransfer' editing and involves deacylation of mischarged Val-tRNA(Ile). This chain is Isoleucine--tRNA ligase, found in Gloeobacter violaceus (strain ATCC 29082 / PCC 7421).